Here is a 142-residue protein sequence, read N- to C-terminus: Transcription antitermination protein NusB (142 aa).

The protein belongs to the NusB family.

Involved in transcription antitermination. Required for transcription of ribosomal RNA (rRNA) genes. Binds specifically to the boxA antiterminator sequence of the ribosomal RNA (rrn) operons. This is Transcription antitermination protein NusB from Buchnera aphidicola subsp. Cinara cedri (strain Cc).